Here is a 367-residue protein sequence, read N- to C-terminus: MELFKYMETYDYEQVLFCQDKESGLKAIIAIHDTTLGPALGGTRMWMYNSEEEALEDALRLARGMTYKNAAAGLNLGGGKTVIIGDPRKDKNEAMFRAFGRFIQGLNGRYITAEDVGTTVADMDIIYQETDYVTGISPEFGSSGNPSPATAYGVYRGMKAAAKEAFGSDSLEGKVVAVQGVGNVAYHLCRHLHEEGAKLIVTDINKEVVARAVEEFGAKAVDPNDIYGVECDIFAPCALGGIINDQTIPQLKAKVIAGSADNQLKEPRHGDIIHEMGIVYAPDYVINAGGVINVADELYGYNRERAMKKIEQIYDNIEKVFAIAKRDNIPTYVAADRMAEERIETMRKARSPFLQNGHHILSRRRAR.

The active site involves Lys80. 180 to 186 (GVGNVAY) lines the NAD(+) pocket.

The protein belongs to the Glu/Leu/Phe/Val dehydrogenases family. As to quaternary structure, homohexamer.

The enzyme catalyses L-leucine + NAD(+) + H2O = 4-methyl-2-oxopentanoate + NH4(+) + NADH + H(+). Its pathway is amino-acid degradation; L-leucine degradation; 4-methyl-2-oxopentanoate from L-leucine (dehydrogenase route): step 1/1. Functionally, catalyzes the reversible deamination of L-leucine to 4-methyl-2-oxopentanoate. This is Leucine dehydrogenase (ldh) from Geobacillus stearothermophilus (Bacillus stearothermophilus).